The primary structure comprises 333 residues: Foldase protein PrsA (333 aa).

A signal peptide spans 1-22; it reads MKKSTKLLAGIVTLASAMTLAA. The N-palmitoyl cysteine moiety is linked to residue C23. C23 carries the S-diacylglycerol cysteine lipid modification. The PpiC domain occupies 145 to 240; sequence TPEMTTQVIT…NKFYIVKVTK (96 aa). The segment at 301 to 333 is disordered; sequence DKKASKANTSKSDQKTSSDSSKDSQSSKSKSEK. The segment covering 312–322 has biased composition (basic and acidic residues); sequence SDQKTSSDSSK. Positions 323–333 are enriched in low complexity; that stretch reads DSQSSKSKSEK.

This sequence belongs to the PrsA family.

It is found in the cell membrane. It carries out the reaction [protein]-peptidylproline (omega=180) = [protein]-peptidylproline (omega=0). Its function is as follows. Plays a major role in protein secretion by helping the post-translocational extracellular folding of several secreted proteins. This Streptococcus equi subsp. zooepidemicus (strain H70) protein is Foldase protein PrsA.